Reading from the N-terminus, the 476-residue chain is Arginine biosynthesis bifunctional protein ArgJ, mitochondrial (476 aa).

Substrate is bound by residues Thr193, Lys219, Thr237, Glu337, Asn471, and Ser476. Thr237 serves as the catalytic Nucleophile.

It belongs to the ArgJ family. Heterodimer of an alpha and a beta chain. Post-translationally, the alpha and beta chains are autoproteolytically processed from a single precursor protein within the mitochondrion.

It localises to the mitochondrion matrix. It carries out the reaction N(2)-acetyl-L-ornithine + L-glutamate = N-acetyl-L-glutamate + L-ornithine. The catalysed reaction is L-glutamate + acetyl-CoA = N-acetyl-L-glutamate + CoA + H(+). It participates in amino-acid biosynthesis; L-arginine biosynthesis; L-ornithine and N-acetyl-L-glutamate from L-glutamate and N(2)-acetyl-L-ornithine (cyclic): step 1/1. Its pathway is amino-acid biosynthesis; L-arginine biosynthesis; N(2)-acetyl-L-ornithine from L-glutamate: step 1/4. In terms of biological role, catalyzes two activities which are involved in the cyclic version of arginine biosynthesis: the synthesis of acetylglutamate from glutamate and acetyl-CoA, and of ornithine by transacetylation between acetylornithine and glutamate. In Cryptococcus neoformans var. neoformans serotype D (strain B-3501A) (Filobasidiella neoformans), this protein is Arginine biosynthesis bifunctional protein ArgJ, mitochondrial.